The primary structure comprises 449 residues: MGKEKVHINIVVIGHVDSGKSTTTGHLIYKLGGIDKRVIERFEKEAAEMNKRSFKYAWVLDKLKAERERGITIDIALWKFETTKYYCTVIDAPGHRDFIKNMITGTSQADCAVLIIDSTTGGFEAGISKDGQTREHALLAFTLGVKQMICCCNKMDATTPKYSKARYDEIVKEVSSYLKKVGYNPDKIPFVPISGFEGDNMIERSTNLDWYKGPTLLEALDQIQEPKRPSDKPLRLPLQDVYKIGGIGTVPVGRVETGILKPGMVVTFGPTGLTTEVKSVEMHHEALQEALPGDNVGFNVKNVAVKDLKRGIVASNSKDDPAKEAANFTSQVIIMNHPGQIGNGYAPVLDCHTSHIAVKFAEILTKIDRRSGKELEKEPKFLKNGDAGFVKMIPTKPMVVETFSAYPPLGRFAVRDMRQTVAVGVIKSVEKKDPSGAKVTKSAAKKGGK.

One can recognise a tr-type G domain in the interval 5–230 (KVHINIVVIG…DQIQEPKRPS (226 aa)). The interval 14–21 (GHVDSGKS) is G1. 14–21 (GHVDSGKS) contributes to the GTP binding site. K55 carries the post-translational modification N6,N6-dimethyllysine. Residues 70-74 (GITID) are G2. K79 is subject to N6,N6,N6-trimethyllysine. The interval 91-94 (DAPG) is G3. Residues 91–95 (DAPGH) and 153–156 (NKMD) contribute to the GTP site. The segment at 153-156 (NKMD) is G4. K187 carries the post-translational modification N6,N6,N6-trimethyllysine. The segment at 194 to 196 (SGF) is G5. K261 bears the N6-methyllysine mark. 5-glutamyl glycerylphosphorylethanolamine is present on E289. K306 is modified (N6,N6,N6-trimethyllysine). E362 bears the 5-glutamyl glycerylphosphorylethanolamine mark. Position 396 is an N6,N6,N6-trimethyllysine (K396).

Belongs to the TRAFAC class translation factor GTPase superfamily. Classic translation factor GTPase family. EF-Tu/EF-1A subfamily.

It localises to the cytoplasm. Its function is as follows. This protein promotes the GTP-dependent binding of aminoacyl-tRNA to the A-site of ribosomes during protein biosynthesis. The sequence is that of Elongation factor 1-alpha (EF1) from Manihot esculenta (Cassava).